The sequence spans 942 residues: Protein inturned (942 aa).

Disordered stretches follow at residues 1–56 and 128–156; these read MAGL…PEWL and LPRR…KTGV. Positions 22–32 are enriched in acidic residues; the sequence is SQEEEEEEGDS. The span at 33 to 48 shows a compositional bias: low complexity; that stretch reads DAGASSLGSYSSASSD. Residues 137-156 are compositionally biased toward polar residues; the sequence is SSNNGPVSILKHQSSQKTGV. The PDZ domain occupies 185 to 267; that stretch reads LLEVLVGIIH…PMQVKLTFEN (83 aa). Ser-674 and Ser-678 each carry phosphoserine. Residues 707 to 751 form a disordered region; the sequence is KARKPSPSRIGGGREPTEGEESAGLSPHATPDAVRKQRESEGSDD.

This sequence belongs to the inturned family. In terms of assembly, component of the CPLANE (ciliogenesis and planar polarity effectors) complex, composed of INTU, FUZ and WDPCP. Interacts with CPLANE1. Interacts with NPHP4 and DAAM1; INTU is mediating the interaction between NPHP4 and DAAM1. Widely expressed in E8.5 and E9.5 wild type embryos. Present in various adult organs (at protein level).

It is found in the cytoplasm. The protein localises to the cell surface. The protein resides in the cytoskeleton. It localises to the cilium basal body. Its subcellular location is the microtubule organizing center. It is found in the centrosome. The protein localises to the centriole. In terms of biological role, plays a key role in ciliogenesis and embryonic development. Regulator of cilia formation by controlling the organization of the apical actin cytoskeleton and the positioning of the basal bodies at the apical cell surface, which in turn is essential for the normal orientation of elongating ciliary microtubules. Plays a key role in definition of cell polarity via its role in ciliogenesis but not via conversion extension. Has an indirect effect on hedgehog signaling. Proposed to function as core component of the CPLANE (ciliogenesis and planar polarity effectors) complex involved in the recruitment of peripheral IFT-A proteins to basal bodies. Required for recruitment of CPLANE2 to the mother centriole. Binds phosphatidylinositol 3-phosphate with highest affinity, followed by phosphatidylinositol 4-phosphate and phosphatidylinositol 5-phosphate. The chain is Protein inturned (Intu) from Mus musculus (Mouse).